Consider the following 1154-residue polypeptide: ATP-dependent RNA helicase DBP10 (1154 aa).

The disordered stretch occupies residues 16–58 (FAARTISATSKPNRNDATASSSKPQKRARRSTKGSDDDGNDDF). Over residues 21–38 (ISATSKPNRNDATASSSK) the composition is skewed to polar residues. Residues 144 to 172 (GSFQSMGLHPSLLRSLLIRGFTTPTPIQR) carry the Q motif motif. In terms of domain architecture, Helicase ATP-binding spans 177–363 (AIMSQPPRDV…KAGLQANPKL (187 aa)). 190-197 (ARTGSGKT) contributes to the ATP binding site. The DEAD box signature appears at 311–314 (DEAD). Disordered stretches follow at residues 417 to 462 (QFNE…GPGG), 826 to 859 (IEGGGDAMEDDEEVTKPKVAARNKGKKKATAGKA), 885 to 939 (FDTT…PNFY), and 1043 to 1154 (MPKT…GASR). Positions 438–451 (RRAEFKGKTKDKHL) are enriched in basic and acidic residues. The Helicase C-terminal domain occupies 446–602 (TKDKHLGNKR…SSHTAIAALA (157 aa)). 2 stretches are compositionally biased toward basic residues: residues 844–855 (VAARNKGKKKAT) and 918–927 (RHTKRARTKK). Composition is skewed to basic and acidic residues over residues 1043–1061 (MPKTGEIESNNHRVHERSP) and 1098–1133 (AAKDEVKSARQIQKDRELKEKRREKNARPSKSDTNR). Over residues 1134–1154 (RAKRGAARRGRGGHGPRGASR) the composition is skewed to basic residues.

It belongs to the DEAD box helicase family. DDX54/DBP10 subfamily.

It is found in the nucleus. The protein resides in the nucleolus. It catalyses the reaction ATP + H2O = ADP + phosphate + H(+). ATP-binding RNA helicase involved in the biogenesis of 60S ribosomal subunits and is required for the normal formation of 25S and 5.8S rRNAs. This Mycosarcoma maydis (Corn smut fungus) protein is ATP-dependent RNA helicase DBP10 (DBP10).